The primary structure comprises 297 residues: uncharacterized protein (297 aa).

Residues F136–K174 form a disordered region. A compositionally biased stretch (acidic residues) spans T139 to N170.

It to S.pombe SpBC725.03.

This is an uncharacterized protein from Saccharomyces cerevisiae (strain ATCC 204508 / S288c) (Baker's yeast).